A 1174-amino-acid chain; its full sequence is Lysylphosphatidylglycerol biosynthesis bifunctional protein LysX (1174 aa).

The tract at residues 1–665 (MGVGLHLTVP…LLHHDGSAPD (665 aa)) is phosphatidylglycerol lysyltransferase. The disordered stretch occupies residues 9–36 (VPGLRRDGRGVQSNSHDTSSKTTADISR). The segment covering 19 to 33 (VQSNSHDTSSKTTAD) has biased composition (polar residues). The next 7 membrane-spanning stretches (helical) occupy residues 82-102 (VPAAAGWTVGVIATLSLLASV), 124-144 (FPDTNFAWSFVLALLAAALTA), 148-168 (IAWLVLLANMVLAAVVNAAEI), 179-199 (FGENLGFAVHVVAIVVLVLGY), 216-236 (AVWLAGAVVGIVASWGLVELF), 274-294 (AIFGLFGAFALIGAAIVLFLS), and 614-634 (VIPRVGVASVIAEGFLVLPFS). Residues 666-1174 (VSGLRQVGLT…TLPFPLAKPH (509 aa)) are lysine--tRNA ligase. A DNA-binding region (OB) is located at residues 728–806 (VSVSGRIMRI…SLIVSGWRLI (79 aa)). Residues Asp-1086 and Glu-1093 each contribute to the Mg(2+) site.

It in the N-terminal section; belongs to the LPG synthetase family. In the C-terminal section; belongs to the class-II aminoacyl-tRNA synthetase family. The cofactor is Mg(2+).

It is found in the cell membrane. It carries out the reaction tRNA(Lys) + L-lysine + ATP = L-lysyl-tRNA(Lys) + AMP + diphosphate. It catalyses the reaction L-lysyl-tRNA(Lys) + a 1,2-diacyl-sn-glycero-3-phospho-(1'-sn-glycerol) = a 1,2-diacyl-sn-glycero-3-phospho-1'-(3'-O-L-lysyl)-sn-glycerol + tRNA(Lys). Its function is as follows. Catalyzes the production of L-lysyl-tRNA(Lys)transfer and the transfer of a lysyl group from L-lysyl-tRNA(Lys) to membrane-bound phosphatidylglycerol (PG), which produces lysylphosphatidylglycerol (LPG), one of the components of the bacterial membrane with a positive net charge. LPG synthesis contributes to the resistance to cationic antimicrobial peptides (CAMPs) and likely protects M.tuberculosis against the CAMPs produced by competiting microorganisms (bacteriocins). In fact, the modification of anionic phosphatidylglycerol with positively charged L-lysine results in repulsion of the peptides. This is Lysylphosphatidylglycerol biosynthesis bifunctional protein LysX (lysX) from Mycobacterium tuberculosis (strain KZN 1435 / MDR).